The sequence spans 65 residues: Large ribosomal subunit protein bL33c (65 aa).

Belongs to the bacterial ribosomal protein bL33 family.

The protein localises to the plastid. It localises to the chloroplast. This chain is Large ribosomal subunit protein bL33c, found in Zygnema circumcarinatum (Green alga).